Reading from the N-terminus, the 551-residue chain is Chaperonin GroEL (551 aa).

Residues 29–32, K50, 86–90, G417, and D499 each bind ATP; these read TAGP and DGTTT.

The protein belongs to the chaperonin (HSP60) family. In terms of assembly, forms a cylinder of 14 subunits composed of two heptameric rings stacked back-to-back. Interacts with the co-chaperonin GroES.

The protein resides in the cytoplasm. It carries out the reaction ATP + H2O + a folded polypeptide = ADP + phosphate + an unfolded polypeptide.. Its function is as follows. Together with its co-chaperonin GroES, plays an essential role in assisting protein folding. The GroEL-GroES system forms a nano-cage that allows encapsulation of the non-native substrate proteins and provides a physical environment optimized to promote and accelerate protein folding. The polypeptide is Chaperonin GroEL (Ehrlichia ruminantium (strain Gardel)).